Reading from the N-terminus, the 175-residue chain is Cuticle protein CP1876 (175 aa).

In terms of tissue distribution, calcified shell.

The chain is Cuticle protein CP1876 from Cancer pagurus (Rock crab).